Here is a 31-residue protein sequence, read N- to C-terminus: Beta-endorphin (31 aa).

The protein belongs to the POMC family.

The protein resides in the secreted. Its function is as follows. Beta-endorphin and Met-enkephalin are endogenous opiates. This is Beta-endorphin (POMC) from Camelus dromedarius (Dromedary).